Consider the following 93-residue polypeptide: Phosphoribosyl-ATP pyrophosphatase (93 aa).

This sequence belongs to the PRA-PH family.

The protein resides in the cytoplasm. The enzyme catalyses 1-(5-phospho-beta-D-ribosyl)-ATP + H2O = 1-(5-phospho-beta-D-ribosyl)-5'-AMP + diphosphate + H(+). It participates in amino-acid biosynthesis; L-histidine biosynthesis; L-histidine from 5-phospho-alpha-D-ribose 1-diphosphate: step 2/9. This Mycobacterium avium (strain 104) protein is Phosphoribosyl-ATP pyrophosphatase.